The following is a 398-amino-acid chain: Large ribosomal subunit protein uL3 (398 aa).

Residues 1–10 (MSHRKFEAPR) show a composition bias toward basic and acidic residues. Residues 1-34 (MSHRKFEAPRHGNLGFRPRKRAARHQGKVKSFPK) form a disordered region. Positions 17–28 (RPRKRAARHQGK) are enriched in basic residues.

Belongs to the universal ribosomal protein uL3 family.

It is found in the cytoplasm. Functionally, the L3 protein is a component of the large subunit of cytoplasmic ribosomes. This is Large ribosomal subunit protein uL3 (rpl3) from Dictyostelium discoideum (Social amoeba).